The sequence spans 444 residues: Tryptophan 5-hydroxylase 1 (444 aa).

Positions 19 to 94 (TLIFSLKNEV…NVLSVTPPDN (76 aa)) constitute an ACT domain. Serine 58 carries the phosphoserine; by PKA modification. 3 residues coordinate L-tryptophan: tyrosine 235, arginine 257, and threonine 265. Positions 272, 277, and 317 each coordinate Fe cation. Serine 336 and isoleucine 366 together coordinate L-tryptophan.

This sequence belongs to the biopterin-dependent aromatic amino acid hydroxylase family. Homotetramer. Interacts with DNAJC12. Fe(2+) serves as cofactor. Ubiquitinated, leading to its degradation by the proteasome. Ubiquitinated is triggered by phosphorylation. In terms of processing, phosphorylated; triggering degradation by the proteasome.

It carries out the reaction (6R)-L-erythro-5,6,7,8-tetrahydrobiopterin + L-tryptophan + O2 = 5-hydroxy-L-tryptophan + (4aS,6R)-4a-hydroxy-L-erythro-5,6,7,8-tetrahydrobiopterin. It participates in aromatic compound metabolism; serotonin biosynthesis; serotonin from L-tryptophan: step 1/2. Its function is as follows. Oxidizes L-tryptophan to 5-hydroxy-l-tryptophan in the rate-determining step of serotonin biosynthesis. In Oryctolagus cuniculus (Rabbit), this protein is Tryptophan 5-hydroxylase 1 (TPH1).